A 174-amino-acid polypeptide reads, in one-letter code: MSETATVGGGCFWCTEAAMKELAGVNTVTSGYAGGDIDNPTYKQVCSGTTDHAEVVQIEYDPTKIEYSELLEVFFATHDPTQLNRQGPDVGTQYRSIILTHTAEQRATAEAYIEALNDHYDDAIVTEIESLERFWSAEEYHQDYFEKNPSDAYCRMHAQPKVEKVRETFTEKLT.

The active site involves Cys-11.

It belongs to the MsrA Met sulfoxide reductase family.

It carries out the reaction L-methionyl-[protein] + [thioredoxin]-disulfide + H2O = L-methionyl-(S)-S-oxide-[protein] + [thioredoxin]-dithiol. The catalysed reaction is [thioredoxin]-disulfide + L-methionine + H2O = L-methionine (S)-S-oxide + [thioredoxin]-dithiol. Its function is as follows. Has an important function as a repair enzyme for proteins that have been inactivated by oxidation. Catalyzes the reversible oxidation-reduction of methionine sulfoxide in proteins to methionine. The protein is Peptide methionine sulfoxide reductase MsrA of Haloquadratum walsbyi (strain DSM 16790 / HBSQ001).